The chain runs to 474 residues: Probable glycine dehydrogenase (decarboxylating) subunit 2 (474 aa).

Residue Lys-266 is modified to N6-(pyridoxal phosphate)lysine.

The protein belongs to the GcvP family. C-terminal subunit subfamily. As to quaternary structure, the glycine cleavage system is composed of four proteins: P, T, L and H. In this organism, the P 'protein' is a heterodimer of two subunits. Pyridoxal 5'-phosphate serves as cofactor.

It carries out the reaction N(6)-[(R)-lipoyl]-L-lysyl-[glycine-cleavage complex H protein] + glycine + H(+) = N(6)-[(R)-S(8)-aminomethyldihydrolipoyl]-L-lysyl-[glycine-cleavage complex H protein] + CO2. In terms of biological role, the glycine cleavage system catalyzes the degradation of glycine. The P protein binds the alpha-amino group of glycine through its pyridoxal phosphate cofactor; CO(2) is released and the remaining methylamine moiety is then transferred to the lipoamide cofactor of the H protein. The sequence is that of Probable glycine dehydrogenase (decarboxylating) subunit 2 from Thermus thermophilus (strain ATCC 27634 / DSM 579 / HB8).